The chain runs to 160 residues: Nucleotide-binding protein PSHAa2277 (160 aa).

Belongs to the YajQ family.

In terms of biological role, nucleotide-binding protein. This chain is Nucleotide-binding protein PSHAa2277, found in Pseudoalteromonas translucida (strain TAC 125).